The primary structure comprises 197 residues: Recombination protein RecR (197 aa).

Residues 57-72 form a C4-type zinc finger; sequence CSICFAITEDDPCAIC. Residues 79–174 form the Toprim domain; it reads GTICVVENSQ…RISRLAHGIP (96 aa).

Belongs to the RecR family.

Its function is as follows. May play a role in DNA repair. It seems to be involved in an RecBC-independent recombinational process of DNA repair. It may act with RecF and RecO. The chain is Recombination protein RecR from Pelobacter propionicus (strain DSM 2379 / NBRC 103807 / OttBd1).